A 105-amino-acid polypeptide reads, in one-letter code: METLRYRFDGQRGARAGLEHALVGVVASGNLEVLVERVPLEGAMEIEILTAARGFGAIWQAVLDDFAARHPLRDVRISINDVGATPAVVSLRLEQALEVLQGADA.

O-(phosphoribosyl dephospho-coenzyme A)serine is present on S28.

This sequence belongs to the MdcC family. Covalently binds the prosthetic group of malonate decarboxylase.

It is found in the cytoplasm. In terms of biological role, subunit of malonate decarboxylase, it is an acyl carrier protein to which acetyl and malonyl thioester residues are bound via a 2'-(5''-phosphoribosyl)-3'-dephospho-CoA prosthetic group and turn over during the catalytic mechanism. This is Malonate decarboxylase acyl carrier protein from Xanthomonas euvesicatoria pv. vesicatoria (strain 85-10) (Xanthomonas campestris pv. vesicatoria).